A 354-amino-acid polypeptide reads, in one-letter code: Type II restriction enzyme BanI (354 aa).

Homodimer.

The catalysed reaction is Endonucleolytic cleavage of DNA to give specific double-stranded fragments with terminal 5'-phosphates.. A P subtype restriction enzyme that recognizes the double-stranded sequence 5'-GGYRCC-3' and cleaves after G-1. This chain is Type II restriction enzyme BanI (banIR), found in Aneurinibacillus aneurinilyticus (Bacillus aneurinolyticus).